The following is a 212-amino-acid chain: Small ribosomal subunit protein uS3 (212 aa).

In terms of domain architecture, KH type-2 spans 38–106 (IRKFVKKTLY…EFAIEVNEIR (69 aa)).

Belongs to the universal ribosomal protein uS3 family. In terms of assembly, part of the 30S ribosomal subunit. Forms a tight complex with proteins S10 and S14.

Binds the lower part of the 30S subunit head. Binds mRNA in the 70S ribosome, positioning it for translation. The chain is Small ribosomal subunit protein uS3 from Nitratidesulfovibrio vulgaris (strain ATCC 29579 / DSM 644 / CCUG 34227 / NCIMB 8303 / VKM B-1760 / Hildenborough) (Desulfovibrio vulgaris).